The sequence spans 758 residues: Polyribonucleotide nucleotidyltransferase (758 aa).

2 residues coordinate Mg(2+): D482 and D488. The KH domain maps to 549 to 608; the sequence is PRVLSFYIDKDKISAAIGTKGKNIRSVCERSNAKIEIGDDGKVSVFAISSTEAEAAKNMM. Residues 618 to 686 form the S1 motif domain; that stretch reads GSIIDAKVVK…KGGCPKLSRR (69 aa). The disordered stretch occupies residues 707 to 758; it reads DGLNNRDNYYNNSFNKKPEDNYHSNRPTRPRSGFSNRSRPKFGNNDSSSGFY. Over residues 711–721 the composition is skewed to low complexity; sequence NRDNYYNNSFN.

Belongs to the polyribonucleotide nucleotidyltransferase family. Requires Mg(2+) as cofactor.

It is found in the cytoplasm. The catalysed reaction is RNA(n+1) + phosphate = RNA(n) + a ribonucleoside 5'-diphosphate. Functionally, involved in mRNA degradation. Catalyzes the phosphorolysis of single-stranded polyribonucleotides processively in the 3'- to 5'-direction. The chain is Polyribonucleotide nucleotidyltransferase from Wolbachia pipientis subsp. Culex pipiens (strain wPip).